The sequence spans 597 residues: Elongation factor 4 (597 aa).

The region spanning 2 to 184 (QHIRNFSIIA…AVISRIPPPK (183 aa)) is the tr-type G domain. Residues 14–19 (DHGKST) and 131–134 (NKID) each bind GTP.

This sequence belongs to the TRAFAC class translation factor GTPase superfamily. Classic translation factor GTPase family. LepA subfamily.

It is found in the cell inner membrane. The enzyme catalyses GTP + H2O = GDP + phosphate + H(+). Functionally, required for accurate and efficient protein synthesis under certain stress conditions. May act as a fidelity factor of the translation reaction, by catalyzing a one-codon backward translocation of tRNAs on improperly translocated ribosomes. Back-translocation proceeds from a post-translocation (POST) complex to a pre-translocation (PRE) complex, thus giving elongation factor G a second chance to translocate the tRNAs correctly. Binds to ribosomes in a GTP-dependent manner. This Nitrosospira multiformis (strain ATCC 25196 / NCIMB 11849 / C 71) protein is Elongation factor 4.